The following is a 463-amino-acid chain: Soluble pyridine nucleotide transhydrogenase (463 aa).

Residue 35 to 44 (EDKPTVGGNC) coordinates FAD.

Belongs to the class-I pyridine nucleotide-disulfide oxidoreductase family. FAD is required as a cofactor.

It is found in the cytoplasm. It catalyses the reaction NAD(+) + NADPH = NADH + NADP(+). In terms of biological role, conversion of NADPH, generated by peripheral catabolic pathways, to NADH, which can enter the respiratory chain for energy generation. This is Soluble pyridine nucleotide transhydrogenase from Marinobacter nauticus (strain ATCC 700491 / DSM 11845 / VT8) (Marinobacter aquaeolei).